Consider the following 403-residue polypeptide: MAACVKTNKSHVIFKKVSRDKSVTIYLGKRDYIDHVSQVEPVDGVVLVDPELVKGKKVYVTLTCAFRYGQEDIDVIGLTFRRDLYFSRVQVYPPVGAMSAPTQLQLSLLKKLGDNTYPFLLTFPDYLPCSVMLQPAPQDVGKSCGVDFEVKAFATDITDAEEDKIPKKSSVRLLIRKVQHAPPEMGPQPCAEASWQFFMSDKPLHLSVSLSKEIYFHGEPIPVTVTVTNNTEKVVKKIKVSVEQIANVVLYSSDYYVKPVASEETQEKVQPNSTLTKTLVLVPLLANNRERRGIALDGKIKHEDTNLASSTIIKEGIDRTVMGILVSYHIKVKLTVSGFLGELTSSEVATEVPFRLMHPQPEDPAKESVQDENLVFEEFARQNLKDTGENTEGKKDEDAGQDE.

T231 carries the post-translational modification Phosphothreonine. The interval 381–403 (RQNLKDTGENTEGKKDEDAGQDE) is disordered.

The protein belongs to the arrestin family. As to quaternary structure, monomer. Homodimer. Homotetramer. Interacts with RHO (via the phosphorylated C-terminus). As to expression, retina and pineal gland.

It localises to the cell projection. The protein resides in the cilium. Its subcellular location is the photoreceptor outer segment. It is found in the membrane. Binds to photoactivated, phosphorylated RHO and terminates RHO signaling via G-proteins by competing with G-proteins for the same binding site on RHO. May play a role in preventing light-dependent degeneration of retinal photoreceptor cells. The chain is S-arrestin (Sag) from Rattus norvegicus (Rat).